Reading from the N-terminus, the 355-residue chain is Tabersonine 16-O-methyltransferase (355 aa).

S-adenosyl-L-methionine is bound by residues 198–201 (IGGG), D222, 222–223 (DL), 242–243 (DM), and K256. The active-site Proton acceptor is H260.

Belongs to the class I-like SAM-binding methyltransferase superfamily. Cation-independent O-methyltransferase family. COMT subfamily. As to quaternary structure, homodimer. Expressed in leaves and flowers. Detected in stems and roots. In leaves, expressed in epidermal cells.

The protein resides in the cytoplasm. The enzyme catalyses 16-hydroxytabersonine + S-adenosyl-L-methionine = 16-methoxytabersonine + S-adenosyl-L-homocysteine + H(+). The protein operates within alkaloid biosynthesis; vindoline biosynthesis. Its function is as follows. 16-O-methyltransferase involved in the biosynthesis of vindoline. Highly specific for 16-hydroxytabersonine. No activity with tabersonine, 3-hydroxytyramine, 4-hydroxytyramine, 5-hydroxytryptamine (5HT), 2,3-dihydro-3-hydroxytabersonine, lochnericine, hoerhammericine, 16-hydroxy-2,3-dihydro-3-hydroxytabersonine, 16-hydroxylochnericine, 16-hydroxyhoerhammericine, quercetin, kaempferol and caffeic acid as substrates. This is Tabersonine 16-O-methyltransferase from Catharanthus roseus (Madagascar periwinkle).